An 823-amino-acid chain; its full sequence is Leucine--tRNA ligase (823 aa).

Positions 42–52 (PYPSGTLHMGH) match the 'HIGH' region motif. The 'KMSKS' region motif lies at 575 to 579 (KMSKS). ATP is bound at residue lysine 578.

Belongs to the class-I aminoacyl-tRNA synthetase family.

It localises to the cytoplasm. It catalyses the reaction tRNA(Leu) + L-leucine + ATP = L-leucyl-tRNA(Leu) + AMP + diphosphate. This Legionella pneumophila subsp. pneumophila (strain Philadelphia 1 / ATCC 33152 / DSM 7513) protein is Leucine--tRNA ligase.